Here is a 503-residue protein sequence, read N- to C-terminus: Cytochrome P450 3A14 (503 aa).

A heme-binding site is contributed by cysteine 442.

This sequence belongs to the cytochrome P450 family. It depends on heme as a cofactor.

The protein resides in the endoplasmic reticulum membrane. It localises to the microsome membrane. The catalysed reaction is an organic molecule + reduced [NADPH--hemoprotein reductase] + O2 = an alcohol + oxidized [NADPH--hemoprotein reductase] + H2O + H(+). Its function is as follows. Cytochromes P450 are a group of heme-thiolate monooxygenases. In liver microsomes, this enzyme is involved in an NADPH-dependent electron transport pathway. It oxidizes a variety of structurally unrelated compounds, including steroids, fatty acids, and xenobiotics. The sequence is that of Cytochrome P450 3A14 (CYP3A14) from Cavia porcellus (Guinea pig).